The following is a 362-amino-acid chain: Methionine import ATP-binding protein MetN (362 aa).

An ABC transporter domain is found at 23-258; sequence VRLTDVKRRF…PQAEITGSLL (236 aa). Residue 55–62 participates in ATP binding; that stretch reads GRSGAGKS.

The protein belongs to the ABC transporter superfamily. Methionine importer (TC 3.A.1.24) family. In terms of assembly, the complex is composed of two ATP-binding proteins (MetN), two transmembrane proteins (MetI) and a solute-binding protein (MetQ).

Its subcellular location is the cell inner membrane. The enzyme catalyses L-methionine(out) + ATP + H2O = L-methionine(in) + ADP + phosphate + H(+). It carries out the reaction D-methionine(out) + ATP + H2O = D-methionine(in) + ADP + phosphate + H(+). Part of the ABC transporter complex MetNIQ involved in methionine import. Responsible for energy coupling to the transport system. The sequence is that of Methionine import ATP-binding protein MetN from Rhizobium johnstonii (strain DSM 114642 / LMG 32736 / 3841) (Rhizobium leguminosarum bv. viciae).